Reading from the N-terminus, the 486-residue chain is Protein nucleotidyltransferase YdiU (486 aa).

ATP is bound by residues glycine 90, glycine 92, arginine 93, lysine 113, aspartate 125, glycine 126, arginine 176, and arginine 183. Aspartate 252 serves as the catalytic Proton acceptor. Asparagine 253 and aspartate 262 together coordinate Mg(2+). ATP is bound at residue aspartate 262.

It belongs to the SELO family. It depends on Mg(2+) as a cofactor. Requires Mn(2+) as cofactor.

It carries out the reaction L-seryl-[protein] + ATP = 3-O-(5'-adenylyl)-L-seryl-[protein] + diphosphate. It catalyses the reaction L-threonyl-[protein] + ATP = 3-O-(5'-adenylyl)-L-threonyl-[protein] + diphosphate. The catalysed reaction is L-tyrosyl-[protein] + ATP = O-(5'-adenylyl)-L-tyrosyl-[protein] + diphosphate. The enzyme catalyses L-histidyl-[protein] + UTP = N(tele)-(5'-uridylyl)-L-histidyl-[protein] + diphosphate. It carries out the reaction L-seryl-[protein] + UTP = O-(5'-uridylyl)-L-seryl-[protein] + diphosphate. It catalyses the reaction L-tyrosyl-[protein] + UTP = O-(5'-uridylyl)-L-tyrosyl-[protein] + diphosphate. Functionally, nucleotidyltransferase involved in the post-translational modification of proteins. It can catalyze the addition of adenosine monophosphate (AMP) or uridine monophosphate (UMP) to a protein, resulting in modifications known as AMPylation and UMPylation. This Pseudomonas putida (strain ATCC 700007 / DSM 6899 / JCM 31910 / BCRC 17059 / LMG 24140 / F1) protein is Protein nucleotidyltransferase YdiU.